Consider the following 328-residue polypeptide: Mannitol-1-phosphate 5-dehydrogenase (328 aa).

An NAD(+)-binding site is contributed by 3 to 14 (LIHFGAGNIGCG).

This sequence belongs to the mannitol dehydrogenase family.

The catalysed reaction is D-mannitol 1-phosphate + NAD(+) = beta-D-fructose 6-phosphate + NADH + H(+). The chain is Mannitol-1-phosphate 5-dehydrogenase (mtlD) from Mycoplasma mycoides subsp. mycoides SC (strain CCUG 32753 / NCTC 10114 / PG1).